A 493-amino-acid chain; its full sequence is Glutamate--tRNA ligase (493 aa).

Residues 9-19 (PSPTGFVHIGS) carry the 'HIGH' region motif. The 'KMSKS' region motif lies at 258–262 (KLSKR). Residue lysine 261 coordinates ATP.

Belongs to the class-I aminoacyl-tRNA synthetase family. Glutamate--tRNA ligase type 1 subfamily. As to quaternary structure, monomer.

It localises to the cytoplasm. It catalyses the reaction tRNA(Glu) + L-glutamate + ATP = L-glutamyl-tRNA(Glu) + AMP + diphosphate. Functionally, catalyzes the attachment of glutamate to tRNA(Glu) in a two-step reaction: glutamate is first activated by ATP to form Glu-AMP and then transferred to the acceptor end of tRNA(Glu). This Clostridioides difficile (strain 630) (Peptoclostridium difficile) protein is Glutamate--tRNA ligase.